The primary structure comprises 311 residues: Ribosomal RNA small subunit methyltransferase H (311 aa).

S-adenosyl-L-methionine-binding positions include 39-41 (GGH), Asp-59, Phe-87, Asp-102, and His-109.

This sequence belongs to the methyltransferase superfamily. RsmH family.

Its subcellular location is the cytoplasm. It catalyses the reaction cytidine(1402) in 16S rRNA + S-adenosyl-L-methionine = N(4)-methylcytidine(1402) in 16S rRNA + S-adenosyl-L-homocysteine + H(+). Specifically methylates the N4 position of cytidine in position 1402 (C1402) of 16S rRNA. The chain is Ribosomal RNA small subunit methyltransferase H from Porphyromonas gingivalis (strain ATCC 33277 / DSM 20709 / CIP 103683 / JCM 12257 / NCTC 11834 / 2561).